A 1173-amino-acid polypeptide reads, in one-letter code: 3-hydroxy-3-methylglutaryl coenzyme A reductase mlcD (1173 aa).

2 N-linked (GlcNAc...) asparagine glycosylation sites follow: asparagine 143 and asparagine 186. An SSD domain is found at 241–420; that stretch reads DVVVMVLGYI…FTFYTAILSI (180 aa). 7 consecutive transmembrane segments (helical) span residues 242 to 262, 272 to 292, 302 to 322, 368 to 388, 397 to 417, 479 to 499, and 594 to 614; these read VVVM…LFLS, LATS…DVAI, LLSE…SITL, NIVC…VLGI, VLAA…YTAI, FWMV…TLFQ, and VLSK…SYLF. A linker region spans residues 498-673; that stretch reads FQASSSGSLS…FTPTTTDSDS (176 aa). Residues 647 to 666 are compositionally biased toward polar residues; sequence NQTPQIQSSLQAPQTRVFTP. The disordered stretch occupies residues 647-669; sequence NQTPQIQSSLQAPQTRVFTPTTT. Residues 674-1133 are catalytic; the sequence is DASLVLIKAS…LVKAHMAHNR (460 aa). The active-site Charge relay system is the glutamate 822. N-linked (GlcNAc...) asparagine glycosylation occurs at asparagine 886. Lysine 956 acts as the Charge relay system in catalysis. Residue asparagine 997 is glycosylated (N-linked (GlcNAc...) asparagine). Aspartate 1032 functions as the Charge relay system in the catalytic mechanism. The Proton donor role is filled by histidine 1128. Residue asparagine 1132 is glycosylated (N-linked (GlcNAc...) asparagine). The disordered stretch occupies residues 1132 to 1173; it reads NRSAPASSAPSRSVSPSGGTRTVPVPNNALRPSAAATDRARR. Low complexity predominate over residues 1133–1148; sequence RSAPASSAPSRSVSPS.

Belongs to the HMG-CoA reductase family.

The protein resides in the endoplasmic reticulum membrane. It catalyses the reaction (R)-mevalonate + 2 NADP(+) + CoA = (3S)-3-hydroxy-3-methylglutaryl-CoA + 2 NADPH + 2 H(+). Its pathway is polyketide biosynthesis. Its function is as follows. HMG-CoA reductase; part of the gene cluster that mediates the biosynthesis of compactin, also known as mevastatin or ML-236B, and which acts as a potent competitive inhibitor of HMG-CoA reductase. Compactin biosynthesis is performed in two stages. The first stage is catalyzed by the nonaketide synthase mlcA, which belongs to type I polyketide synthases and catalyzes the iterative nine-step formation of the polyketide. This PKS stage is completed by the action of dehydrogenase mlcG, which catalyzes the NADPH-dependent reduction of the unsaturated tetra-, penta- and heptaketide intermediates that arise during the mlcA-mediated biosynthesis of the nonaketide chain and leads to dihydro-ML-236C carboxylate. Covalently bound dihydro-ML-236C carboxylate is released from mlcA by the mlcF esterase. Conversion of dihydro-ML-236C carboxylate into ML-236A carboxylate is subsequently performed with the participation of molecular oxygen and P450 monoogygenase mlcC. Finally, mlcH performs the conversion of ML-236A carboxylate to ML-236B/compactin carboxylate through the addition of the side-chain diketide moiety produced by the diketide synthase mlcB. HMG-CoA reductase mlcD may act as a down-regulator of compactin production and is involved in conferring resistance to ML-236B/compactin. This is 3-hydroxy-3-methylglutaryl coenzyme A reductase mlcD from Penicillium citrinum.